The chain runs to 640 residues: Threonine--tRNA ligase (640 aa).

Positions 1 to 61 (MPIITLPNGD…TEDATLQIIT (61 aa)) constitute a TGS domain. The interval 242–533 (DHRKIGKALD…LIEHYAGFMP (292 aa)) is catalytic. Residues Cys-333, His-384, and His-510 each contribute to the Zn(2+) site.

It belongs to the class-II aminoacyl-tRNA synthetase family. As to quaternary structure, homodimer. Zn(2+) is required as a cofactor.

Its subcellular location is the cytoplasm. It catalyses the reaction tRNA(Thr) + L-threonine + ATP = L-threonyl-tRNA(Thr) + AMP + diphosphate + H(+). In terms of biological role, catalyzes the attachment of threonine to tRNA(Thr) in a two-step reaction: L-threonine is first activated by ATP to form Thr-AMP and then transferred to the acceptor end of tRNA(Thr). Also edits incorrectly charged L-seryl-tRNA(Thr). This chain is Threonine--tRNA ligase, found in Acinetobacter baylyi (strain ATCC 33305 / BD413 / ADP1).